The sequence spans 362 residues: Innexin-17 (362 aa).

4 helical membrane passes run 27 to 47, 101 to 121, 189 to 209, and 266 to 286; these read YFTV…QYVG, WVPF…VIWN, FLAT…MGLG, and LFIA…FDIF.

Belongs to the pannexin family.

Its subcellular location is the cell membrane. It is found in the cell junction. The protein localises to the gap junction. Functionally, structural component of the gap junctions. The chain is Innexin-17 from Caenorhabditis elegans.